We begin with the raw amino-acid sequence, 395 residues long: Probable L-tyrosine/L-aspartate decarboxylase (395 aa).

An N6-(pyridoxal phosphate)lysine modification is found at K242.

This sequence belongs to the group II decarboxylase family. MfnA subfamily. Pyridoxal 5'-phosphate is required as a cofactor.

It carries out the reaction L-tyrosine + H(+) = tyramine + CO2. It catalyses the reaction L-aspartate + H(+) = beta-alanine + CO2. Its pathway is cofactor biosynthesis; methanofuran biosynthesis. It participates in cofactor biosynthesis; coenzyme A biosynthesis. Functionally, catalyzes the decarboxylation of L-tyrosine to produce tyramine for methanofuran biosynthesis. Can also catalyze the decarboxylation of L-aspartate to produce beta-alanine for coenzyme A (CoA) biosynthesis. In Methanosarcina acetivorans (strain ATCC 35395 / DSM 2834 / JCM 12185 / C2A), this protein is Probable L-tyrosine/L-aspartate decarboxylase.